A 41-amino-acid polypeptide reads, in one-letter code: Large ribosomal subunit protein bL36 (41 aa).

It belongs to the bacterial ribosomal protein bL36 family.

In Cereibacter sphaeroides (strain ATCC 17029 / ATH 2.4.9) (Rhodobacter sphaeroides), this protein is Large ribosomal subunit protein bL36.